The primary structure comprises 531 residues: Beta-hexosaminidase subunit beta (531 aa).

Positions 1 to 24 (MRHRGLGLAALLALLAAVAPRSSA) are cleaved as a signal peptide. A glycan (N-linked (GlcNAc...) asparagine) is linked at Asn50. The cysteines at positions 65 and 111 are disulfide-linked. N-linked (GlcNAc...) asparagine glycans are attached at residues Asn116, Asn164, and Asn301. 2 disulfide bridges follow: Cys283–Cys334 and Cys508–Cys525. The active-site Proton donor is the Glu329.

The protein belongs to the glycosyl hydrolase 20 family. In terms of assembly, there are 3 forms of beta-hexosaminidase: hexosaminidase A is a heterodimer composed of one subunit alpha and one subunit beta (chain A and B); hexosaminidase B is a homodimer of two beta subunits (two chains A and B); hexosaminidase S is a homodimer of two alpha subunits. The composition of the dimer (isozyme A versus isozyme S) has a significant effect on the substrate specificity of the alpha subunit active site.

Its subcellular location is the lysosome. The protein localises to the cytoplasmic vesicle. The protein resides in the secretory vesicle. It is found in the cortical granule. It catalyses the reaction Hydrolysis of terminal non-reducing N-acetyl-D-hexosamine residues in N-acetyl-beta-D-hexosaminides.. It carries out the reaction N-acetyl-beta-D-galactosaminyl-(1-&gt;4)-beta-D-3-sulfogalactosyl-(1-&gt;4)-beta-D-glucosyl-(1&lt;-&gt;1')-ceramide + H2O = a beta-D-3-sulfogalactosyl-(1-&gt;4)-beta-D-glucosyl-(1&lt;-&gt;1')-ceramide + N-acetyl-beta-D-galactosamine. The enzyme catalyses a ganglioside GM2 (d18:1(4E)) + H2O = a ganglioside GM3 (d18:1(4E)) + N-acetyl-beta-D-galactosamine. The catalysed reaction is a ganglioside GM2 + H2O = a ganglioside GM3 + N-acetyl-beta-D-galactosamine. It catalyses the reaction beta-D-GalNAc-(1-&gt;4)-alpha-L-IdoA-(1-&gt;3)-beta-D-GalNAc-4-sulfate-(1-&gt;4)-alpha-L-IdoA-(1-&gt;3)-D-GalNAc-4-sulfate + H2O = alpha-L-IdoA-(1-&gt;3)-beta-D-GalNAc-4-sulfate-(1-&gt;4)-alpha-L-IdoA-(1-&gt;3)-D-GalNAc-4-sulfate + N-acetyl-D-galactosamine. It carries out the reaction N-acetyl-beta-D-6-sulfogalactosaminyl-(1-&gt;4)-alpha-L-iduronyl-(1-&gt;3)-N-acetyl-D-6-sulfogalactosamine + H2O = alpha-L-iduronyl-(1-&gt;3)-N-acetyl-D-6-sulfogalactosamine + N-acetyl-D-6-sulfogalactosamine. With respect to regulation, addition of GM2A stimulates the hydrolysis of sulfated glycosphingolipid SM2 and the ganglioside GM2. Hydrolyzes the non-reducing end N-acetyl-D-hexosamine and/or sulfated N-acetyl-D-hexosamine of glycoconjugates, such as the oligosaccharide moieties from proteins and neutral glycolipids, or from certain mucopolysaccharides. The isozyme B does not hydrolyze each of these substrates, however hydrolyzes efficiently neutral oligosaccharide. Only the isozyme A is responsible for the degradation of GM2 gangliosides in the presence of GM2A. During fertilization is responsible, at least in part, for the zona block to polyspermy. Present in the cortical granules of non-activated oocytes, is exocytosed during the cortical reaction in response to oocyte activation and inactivates the sperm galactosyltransferase-binding site, accounting for the block in sperm binding to the zona pellucida. This is Beta-hexosaminidase subunit beta from Felis catus (Cat).